Here is a 541-residue protein sequence, read N- to C-terminus: Chaperonin GroEL, cyanelle (541 aa).

ATP is bound by residues 29 to 32 (TLGP), 86 to 90 (DGTTT), Gly-413, 479 to 481 (NAA), and Asp-495.

The protein belongs to the chaperonin (HSP60) family. In terms of assembly, forms a cylinder of 14 subunits composed of two heptameric rings stacked back-to-back. Interacts with the co-chaperonin GroES.

Its subcellular location is the plastid. The protein resides in the cyanelle. The catalysed reaction is ATP + H2O + a folded polypeptide = ADP + phosphate + an unfolded polypeptide.. Its function is as follows. Together with its co-chaperonin GroES, plays an essential role in assisting protein folding. The GroEL-GroES system forms a nano-cage that allows encapsulation of the non-native substrate proteins and provides a physical environment optimized to promote and accelerate protein folding. The polypeptide is Chaperonin GroEL, cyanelle (Cyanophora paradoxa).